The primary structure comprises 567 residues: Zinc finger protein 512 (567 aa).

The tract at residues 1–32 (MSSRLGAVPATSGPTTFKQQRSTRIVGAKNSR) is disordered. A compositionally biased stretch (polar residues) spans 12–23 (SGPTTFKQQRST). Residues Lys18 and Lys84 each participate in a glycyl lysine isopeptide (Lys-Gly) (interchain with G-Cter in SUMO2) cross-link. The segment at 86-148 (AATSHVEGSG…QARRIRKEPP (63 aa)) is disordered. Positions 119 to 130 (KKHKLYGRKQRP) are enriched in basic residues. The segment at 197–220 (FTCHHCGKQLRSLAGMKYHVMANH) adopts a C2H2-type 1 zinc-finger fold. Residue Lys227 forms a Glycyl lysine isopeptide (Lys-Gly) (interchain with G-Cter in SUMO2) linkage. The C2H2-type 2 zinc-finger motif lies at 287-310 (LKCHHCGKPYRSKAGLAYHLRSEH). Lys333 participates in a covalent cross-link: Glycyl lysine isopeptide (Lys-Gly) (interchain with G-Cter in SUMO2). Residues 406–430 (IQCPNQGCEAVYSSVSGLKAHLGSC) form a C2H2-type 3; atypical zinc finger. A C2H2-type 4 zinc finger spans residues 440–463 (YKCLLCQKEFVSESGVKYHINSVH). The disordered stretch occupies residues 486–567 (QRQQEEEKRR…PKTNHKRGRK (82 aa)). Residues 495 to 508 (RQQHRSRRSLRRRQ) show a composition bias toward basic residues. Residues 523-532 (VGKDQRRNNE) show a composition bias toward basic and acidic residues. Over residues 556–567 (KPPKTNHKRGRK) the composition is skewed to basic residues.

The protein belongs to the krueppel C2H2-type zinc-finger protein family.

The protein resides in the nucleus. Functionally, may be involved in transcriptional regulation. This Pongo abelii (Sumatran orangutan) protein is Zinc finger protein 512 (ZNF512).